The following is an 831-amino-acid chain: MYSVLFRQAEESSQLAGAKGMNLIKLTKHGLPVPDGFIIQTNALARFMEDNQLQETSENVEGGIISGTFSDELKDELTSSFYKLRESYRSVAVRSSSASEDLEGASFAGQYETYLNIKTEEEFLAKVKECWASFFSGRVSSYKKKMNNQIAEPLMGIVVQGLIDSEMSGVIFSRNPVTHDDRELLISASYGLGEAVVSGNVTPDTFIVNKSSFEIQKEIGAKEIYMESAAEGIAEKETSEDMRSRFCLTDEQVIELAEITKKTEDLYGYPVDIEFGIADHQIYLLQARPITTIDQDKKAAEEKRSFMITDTDMNDFWLNMESNIEGPVSPLFSSFIVPALEYGLKKSMQKFPIGVVVDEVKLYRGHIYSKNQGGQQPPSEDCGKELFPILSEHMYDIINHTYLPFYRTLDQLAQTEHTAESALEAFQKLKAFYLTAYEEHFNIVFPQILLTNKLQAMYQDIQGESENAHFYEMLTGKMNKSLETDRCLWLFSVEVQENPNLLAIFENNKPEQLQEKLEQTDEGRHFLKNVHEFLQEYGWRSVKSHDLIEQIWVENPYFALANIQNYVRNGYHFDNEFQKTKEKREKLYNEFLESIEDPGLRTEFDRYYQWTLNSANIKDDHHFYIDAMLDAKARIFLLKIGELLAENGVIQDREDLWFLYDDEVEQALLHPVSLQEKAEKRRQIFHEYELAQAPAYLGTPTKEQLKAAEEIVGAVIEDEKNTENHIFGIAASSGIATGPVKIIRDANEFSQFAPGDVLVCKMTTPLWTSLFQDAKAIITDTGGILSHAAIIAREYGIPAVLGTRTATERLRDGDIITVDGSSGKITVVSRS.

Catalysis depends on His787, which acts as the Tele-phosphohistidine intermediate.

It belongs to the PEP-utilizing enzyme family.

This is an uncharacterized protein from Bacillus subtilis (strain 168).